The following is a 557-amino-acid chain: Alpha-glucosidase (557 aa).

Residue Asp201 is the Nucleophile of the active site. Glu256 serves as the catalytic Proton donor.

Belongs to the glycosyl hydrolase 13 family.

The catalysed reaction is Hydrolysis of terminal, non-reducing (1-&gt;4)-linked alpha-D-glucose residues with release of alpha-D-glucose.. This Pediococcus pentosaceus protein is Alpha-glucosidase (agl).